A 427-amino-acid chain; its full sequence is ATP-sensitive inward rectifier potassium channel 12 (427 aa).

Over 1–77 (MTAASRANPY…LADMFTTCVD (77 aa)) the chain is Cytoplasmic. S-nitrosocysteine is present on cysteine 75. The helical transmembrane segment at 78 to 104 (IRWRYMLLIFSLAFLASWLLFGIIFWV) threads the bilayer. A 1,2-diacyl-sn-glycero-3-phospho-(1D-myo-inositol-4,5-bisphosphate) contacts are provided by arginine 79 and arginine 81. The Extracellular segment spans residues 105–129 (IAVAHGDLEPAEGRGRTPCVLQVHG). Cysteines 123 and 155 form a disulfide. The segment at residues 130-146 (FMAAFLFSIETQTTIGY) is an intramembrane region (helical; Pore-forming). Threonine 143, isoleucine 144, glycine 145, and tyrosine 146 together coordinate K(+). Positions 143–148 (TIGYGL) match the Selectivity filter motif. Residues 147 to 155 (GLRCVTEEC) are Extracellular-facing. Residues 156 to 183 (PVAVFMVVAQSIVGCIIDSFMIGAIMAK) traverse the membrane as a helical segment. Lysine 183 and lysine 188 together coordinate a 1,2-diacyl-sn-glycero-3-phospho-(1D-myo-inositol-4,5-bisphosphate). At 184–427 (MGRPKKRAQT…ERPYRRESEI (244 aa)) the chain is on the cytoplasmic side. Positions 387 to 427 (DEEDEVATDRDGRSPQPEHDFDRLQASSGALERPYRRESEI) are disordered. Residues 393 to 409 (ATDRDGRSPQPEHDFDR) are compositionally biased toward basic and acidic residues. The short motif at 425-427 (SEI) is the PDZ-binding element.

Belongs to the inward rectifier-type potassium channel (TC 1.A.2.1) family. KCNJ12 subfamily. Homotetramer. Forms heteromer with KCNJ4. Can form heteromeric channels with Kir2.6/KCNJ18. Association, via its PDZ-recognition domain, with LIN7A, LIN7B, LIN7C, DLG1, CASK and APBA1 plays a key role in its localization and trafficking. In terms of tissue distribution, highest level in cerebellum. Moderately found in kidney, forebrain and skeletal muscle. Not detected in uterus, liver and pancreas.

The protein resides in the membrane. It localises to the cell membrane. The protein localises to the sarcolemma. It is found in the T-tubule. The catalysed reaction is K(+)(in) = K(+)(out). Activated by phosphatidylinositol 4,5-biphosphate (PtdIns(4,5)P2). PtdIns(4,5)P2 binding to the cytoplasmic side of the channel triggers a conformation change leading to channel opening. Inhibited by Ba(2+). In terms of biological role, inward rectifying potassium channel that probably participates in controlling the resting membrane potential in electrically excitable cells. It probably participates in establishing action potential waveform and excitability of neuronal and muscle tissues. Inward rectifier potassium channels are characterized by a greater tendency to allow potassium to flow into the cell rather than out of it. Their voltage dependence is regulated by the concentration of extracellular potassium; as external potassium is raised, the voltage range of the channel opening shifts to more positive voltages. The inward rectification is mainly due to the blockage of outward current by internal magnesium. The sequence is that of ATP-sensitive inward rectifier potassium channel 12 (Kcnj12) from Rattus norvegicus (Rat).